The chain runs to 396 residues: N-terminal EF-hand calcium-binding protein 3 (396 aa).

A compositionally biased stretch (pro residues) spans 14–34 (PPAPQPQPQTPRHPQLAPDPG). Residues 14 to 36 (PPAPQPQPQTPRHPQLAPDPGPA) are disordered. The 36-residue stretch at 36-71 (AGHTLFQDVFRRADKNDDGKLSFEEFQNYFADGVLS) folds into the EF-hand domain. Ca(2+)-binding residues include D49, N51, D53, K55, and E60. Positions 181–190 (VEAQSRLCGS) are required for interaction with APBA3. The segment at 197–220 (ALRSVSRSSTWSPGSSDTGRSSEA) is disordered. Positions 206–217 (TWSPGSSDTGRS) are enriched in polar residues. The 90-residue stretch at 296-385 (LMAQRQVQVA…RAPDTLTTVF (90 aa)) folds into the ABM domain.

As to quaternary structure, interacts with the N-terminal domain of APBA2. Interacts with NEK2. Interacts with APBA3; APBA3 seems to mediate the interaction between NECAB3 and HIF1AN. Phosphorylated by NEK2. As to expression, strongly expressed in heart and skeletal muscle, moderately in brain and pancreas.

Its subcellular location is the golgi apparatus. Its function is as follows. Inhibits the interaction of APBA2 with amyloid-beta precursor protein (APP), and hence allows formation of amyloid-beta. May enhance the activity of HIF1A and thus promote glycolysis under normoxic conditions; the function requires its ABM domain and may implicate the stabilization of the interaction between HIF1AN and APBA3. The sequence is that of N-terminal EF-hand calcium-binding protein 3 (NECAB3) from Homo sapiens (Human).